The chain runs to 344 residues: UDP-glycosyltransferase 73C4 (344 aa).

UDP-alpha-D-glucose-binding positions include Ser-145, 202–203, 220–228, and 242–245; these read WA, HCGWNSSLE, and FAEQ.

This sequence belongs to the UDP-glycosyltransferase family. In terms of tissue distribution, expressed in flowers and fruits.

The protein resides in the cytoplasm. It localises to the nucleus. Its function is as follows. Probable glucosyltransferase that cannot glycosylate abscisic acid (ABA) and auxin (IAA). In Solanum lycopersicum (Tomato), this protein is UDP-glycosyltransferase 73C4.